Reading from the N-terminus, the 109-residue chain is Putative pterin-4-alpha-carbinolamine dehydratase (109 aa).

Belongs to the pterin-4-alpha-carbinolamine dehydratase family.

The catalysed reaction is (4aS,6R)-4a-hydroxy-L-erythro-5,6,7,8-tetrahydrobiopterin = (6R)-L-erythro-6,7-dihydrobiopterin + H2O. This Halorhodospira halophila (strain DSM 244 / SL1) (Ectothiorhodospira halophila (strain DSM 244 / SL1)) protein is Putative pterin-4-alpha-carbinolamine dehydratase.